The sequence spans 315 residues: DNA-directed RNA polymerase subunit alpha (315 aa).

The segment at M1 to T228 is alpha N-terminal domain (alpha-NTD). Residues K245–E315 are alpha C-terminal domain (alpha-CTD).

Belongs to the RNA polymerase alpha chain family. Homodimer. The RNAP catalytic core consists of 2 alpha, 1 beta, 1 beta' and 1 omega subunit. When a sigma factor is associated with the core the holoenzyme is formed, which can initiate transcription.

The enzyme catalyses RNA(n) + a ribonucleoside 5'-triphosphate = RNA(n+1) + diphosphate. DNA-dependent RNA polymerase catalyzes the transcription of DNA into RNA using the four ribonucleoside triphosphates as substrates. This is DNA-directed RNA polymerase subunit alpha from Clostridium novyi (strain NT).